A 205-amino-acid polypeptide reads, in one-letter code: Outer-membrane lipoprotein carrier protein (205 aa).

The signal sequence occupies residues 1 to 21 (MRFLAVATMVVALMVPWSVRA).

The protein belongs to the LolA family. In terms of assembly, monomer.

The protein resides in the periplasm. In terms of biological role, participates in the translocation of lipoproteins from the inner membrane to the outer membrane. Only forms a complex with a lipoprotein if the residue after the N-terminal Cys is not an aspartate (The Asp acts as a targeting signal to indicate that the lipoprotein should stay in the inner membrane). This chain is Outer-membrane lipoprotein carrier protein, found in Methylobacillus flagellatus (strain ATCC 51484 / DSM 6875 / VKM B-1610 / KT).